We begin with the raw amino-acid sequence, 529 residues long: DNA-binding protein (529 aa).

Positions 1–17 (MASREEEQRETTPERGR) are enriched in basic and acidic residues. Disordered stretches follow at residues 1-107 (MASR…IVDS) and 125-166 (PVLI…AESE). The span at 129–139 (KHGKGGKRTVR) shows a compositional bias: basic residues. Over residues 155–165 (EEEEEPSEAES) the composition is skewed to acidic residues. A Phosphotyrosine; by host modification is found at Y195. 2 residues coordinate Zn(2+): C284 and H286. Positions 297–331 (IEMDVTSENGQRALKEQSSKAKIVKNRWGRNVVQI) are flexible loop. Zn(2+) contacts are provided by C339, C355, C396, C398, C450, and C467. A C-terminal arm, DBP binding region spans residues 513–529 (VSLPVAHSDARQNPFDF).

Belongs to the adenoviridae E2A DNA-binding protein family. As to quaternary structure, homomultimerizes on viral ssDNA bound to pTP. Forms a initiation complex with viral polymerase, pTP and hosts NFIA and POU2F1/OCT1. Interacts with host SRCAP.

It is found in the host nucleus. Its function is as follows. Plays a role in the elongation phase of viral strand displacement replication by unwinding the template in an ATP-independent fashion, employing its capacity to form multimers. Also enhances the rate of initiation. Released from template upon second strand synthesis. Assembles in complex with viral pTP, viral pol, host NFIA and host POU2F1/OCT1 on viral origin of replication. Covers the whole ssDNA genome during synthesis. The complementary strand synthesis induces its relese from DNA template. May inhibit cellular transcription mediated by the interaction between host SRCAP and CBP. The protein is DNA-binding protein of Human adenovirus C serotype 5 (HAdV-5).